The chain runs to 243 residues: Ubiquinone/menaquinone biosynthesis C-methyltransferase UbiE (243 aa).

S-adenosyl-L-methionine-binding positions include Thr69, Asp90, and 116–117; that span reads DA.

This sequence belongs to the class I-like SAM-binding methyltransferase superfamily. MenG/UbiE family.

The enzyme catalyses a 2-demethylmenaquinol + S-adenosyl-L-methionine = a menaquinol + S-adenosyl-L-homocysteine + H(+). It carries out the reaction a 2-methoxy-6-(all-trans-polyprenyl)benzene-1,4-diol + S-adenosyl-L-methionine = a 5-methoxy-2-methyl-3-(all-trans-polyprenyl)benzene-1,4-diol + S-adenosyl-L-homocysteine + H(+). The protein operates within quinol/quinone metabolism; menaquinone biosynthesis; menaquinol from 1,4-dihydroxy-2-naphthoate: step 2/2. It functions in the pathway cofactor biosynthesis; ubiquinone biosynthesis. Functionally, methyltransferase required for the conversion of demethylmenaquinol (DMKH2) to menaquinol (MKH2) and the conversion of 2-polyprenyl-6-methoxy-1,4-benzoquinol (DDMQH2) to 2-polyprenyl-3-methyl-6-methoxy-1,4-benzoquinol (DMQH2). In Paraburkholderia phymatum (strain DSM 17167 / CIP 108236 / LMG 21445 / STM815) (Burkholderia phymatum), this protein is Ubiquinone/menaquinone biosynthesis C-methyltransferase UbiE.